A 506-amino-acid chain; its full sequence is Thyroid hormone receptor alpha (506 aa).

The tract at residues 1–32 (MEQKPSKVECGSDPEENSARSPDGKRKRKNGQ) is disordered. A modulating region spans residues 1 to 52 (MEQKPSKVECGSDPEENSARSPDGKRKRKNGQCSLKTSMSGYIPSYLDKDEQ). Zn(2+)-binding residues include C53, C56, C70, C73, C91, C97, C107, and C110. 2 consecutive NR C4-type zinc fingers follow at residues 53-73 (CVVCGDKATGYHYRCITCEGC) and 91-115 (CKYDSCCVIDKITRNQCQLCRFKKC). The segment at residues 53–127 (CVVCGDKATG…VGMAMDLVLD (75 aa)) is a DNA-binding region (nuclear receptor). Positions 163–407 (EEWDLIHVAT…EGQQLLGMHV (245 aa)) constitute an NR LBD domain. Positions 228 and 277 each coordinate 3,3',5-triiodo-L-thyronine. The interval 460–506 (GEDDSSEAGSLTSSDEDPEVCEDAAQATQPLPEAPPRADGEGGGGGS) is disordered.

This sequence belongs to the nuclear hormone receptor family. NR1 subfamily. Binds DNA as a dimer; homodimer and heterodimer with RXRB. Interacts with NCOA3 and NCOA6 coactivators, leading to a strong increase of transcription of target genes. Probably interacts with SFPQ. Interacts with C1D. Interacts with AKAP13. Interacts with TP53INP2. Interacts with PER2. Interacts with PER2. Isoform alpha-2 and isoform alpha-1 interact with TACC1, but the interaction with alpha-1 is weaker. The interaction with isoform alpha-1, but not alpha-2, is decreased in the presence of thyroid hormone T3.

It localises to the nucleus. Its subcellular location is the cytoplasm. In terms of biological role, nuclear hormone receptor that can act as a repressor or activator of transcription. High affinity receptor for thyroid hormones, including triiodothyronine and thyroxine. The sequence is that of Thyroid hormone receptor alpha (THRA) from Sus scrofa (Pig).